A 301-amino-acid chain; its full sequence is Probable alpha-L-glutamate ligase 2 (301 aa).

Residues 104–287 (LQLLSRKGIG…VAEPIVEYIE (184 aa)) enclose the ATP-grasp domain. ATP contacts are provided by residues Lys-141, 178–179 (EY), Asp-187, and 211–213 (RSN). Mg(2+) contacts are provided by Asp-248, Glu-260, and Asn-262. Mn(2+)-binding residues include Asp-248, Glu-260, and Asn-262.

The protein belongs to the RimK family. The cofactor is Mg(2+). It depends on Mn(2+) as a cofactor.

The protein is Probable alpha-L-glutamate ligase 2 of Shewanella amazonensis (strain ATCC BAA-1098 / SB2B).